The primary structure comprises 195 residues: uncharacterized protein (195 aa).

Disordered regions lie at residues 1–51 (MTHN…GPSY) and 160–195 (SYSQQQEPQHYYKKHKHHSHHRPKHVKSSRSCKSCN). The segment covering 13-28 (SYQNQAPQPQYYTRQP) has biased composition (polar residues). The span at 170–189 (YYKKHKHHSHHRPKHVKSSR) shows a compositional bias: basic residues.

This is an uncharacterized protein from Acanthamoeba polyphaga mimivirus (APMV).